Here is a 507-residue protein sequence, read N- to C-terminus: Glutamate--tRNA ligase (507 aa).

The 'HIGH' region signature appears at 14–24 (PSPTGYLHIGG). Residues 261–265 (KLSKR) carry the 'KMSKS' region motif. Lys-264 contributes to the ATP binding site.

This sequence belongs to the class-I aminoacyl-tRNA synthetase family. Glutamate--tRNA ligase type 1 subfamily. As to quaternary structure, monomer.

The protein localises to the cytoplasm. It catalyses the reaction tRNA(Glu) + L-glutamate + ATP = L-glutamyl-tRNA(Glu) + AMP + diphosphate. Its function is as follows. Catalyzes the attachment of glutamate to tRNA(Glu) in a two-step reaction: glutamate is first activated by ATP to form Glu-AMP and then transferred to the acceptor end of tRNA(Glu). The chain is Glutamate--tRNA ligase from Roseiflexus castenholzii (strain DSM 13941 / HLO8).